The chain runs to 142 residues: HTH-type transcriptional regulator MntR (142 aa).

The 63-residue stretch at 1 to 63 folds into the HTH dtxR-type domain; it reads MPTPSMEDYI…YEKYRGLILT (63 aa). Residues Asp8, Glu11, His77, Glu99, Glu102, and His103 each contribute to the Mn(2+) site.

This sequence belongs to the DtxR/MntR family. Homodimer.

The protein resides in the cytoplasm. DNA binding is strongly activated by Mn(2+). Functionally, central regulator of manganese homeostasis. The polypeptide is HTH-type transcriptional regulator MntR (Listeria welshimeri serovar 6b (strain ATCC 35897 / DSM 20650 / CCUG 15529 / CIP 8149 / NCTC 11857 / SLCC 5334 / V8)).